The primary structure comprises 261 residues: Ribosome biogenesis protein C3_06160C_A (261 aa).

Residues 1–38 (MPQNEYIEQHIKKHGRRLDYEERKRKKEAREGHRVAKD) are disordered. 2 consecutive short sequence motifs (nuclear localization signal) follow at residues 11–18 (IKKHGRRL) and 51–58 (AKKRYAEK). Over residues 17–37 (RLDYEERKRKKEAREGHRVAK) the composition is skewed to basic and acidic residues. The segment at 59–85 (VAMKKKIKAHQESKVKGPSTPKAEDGE) is disordered.

It belongs to the eukaryotic ribosomal protein eS8 family. Ribosome biogenesis protein NSA2 subfamily. As to quaternary structure, component of the pre-66S ribosomal particle. Interacts with NOP7 and RRP1. Interacts with RSA4 (via WD repeats).

The protein resides in the nucleus. The protein localises to the nucleolus. Functionally, involved in the biogenesis of the 60S ribosomal subunit. May play a part in the quality control of pre-60S particles. The polypeptide is Ribosome biogenesis protein C3_06160C_A (Candida albicans (strain SC5314 / ATCC MYA-2876) (Yeast)).